A 305-amino-acid chain; its full sequence is Putative beta-lactamase HcpD (305 aa).

Positions 1–27 (MIKSWTKKWFLILFLMASCFGHLVATT) are cleaved as a signal peptide. TPR repeat units lie at residues 28–61 (GEKY…RMGV), 96–133 (HLAC…KGGV), 168–205 (GISC…KDGA), and 240–277 (GSGC…GFSG). Cystine bridges form between Cys-55–Cys-63, Cys-91–Cys-99, Cys-127–Cys-135, Cys-163–Cys-171, Cys-199–Cys-207, Cys-235–Cys-243, and Cys-271–Cys-279.

It belongs to the hcp beta-lactamase family.

It localises to the secreted. The enzyme catalyses a beta-lactam + H2O = a substituted beta-amino acid. In terms of biological role, may hydrolyze 6-aminopenicillinic acid and 7-aminocephalosporanic acid (ACA) derivatives. Binds to penicillin. This Helicobacter pylori (strain J99 / ATCC 700824) (Campylobacter pylori J99) protein is Putative beta-lactamase HcpD (hcpD).